The sequence spans 57 residues: Large ribosomal subunit protein bL32 (57 aa).

Residues 1–20 (MAVPKKKTSKGKRNQRHAVW) show a composition bias toward basic residues. The tract at residues 1–23 (MAVPKKKTSKGKRNQRHAVWKAK) is disordered.

This sequence belongs to the bacterial ribosomal protein bL32 family.

The sequence is that of Large ribosomal subunit protein bL32 from Prochlorococcus marinus (strain SARG / CCMP1375 / SS120).